The chain runs to 484 residues: Probable receptor-like protein kinase At5g18500 (484 aa).

A helical membrane pass occupies residues I21 to T41. The disordered stretch occupies residues R72–A135. Positions K91–S105 are enriched in basic and acidic residues. Over residues S125 to T134 the composition is skewed to polar residues. T155 is subject to Phosphothreonine. A Protein kinase domain is found at F166–A445. ATP-binding positions include I172–V180 and K194. A Phosphotyrosine modification is found at Y239. The active-site Proton acceptor is the D292. S296 carries the phosphoserine modification. Residues T326 and T331 each carry the phosphothreonine modification. Y339 is subject to Phosphotyrosine. The interval E425–G484 is disordered. A compositionally biased stretch (basic and acidic residues) spans R460–G484.

This sequence belongs to the protein kinase superfamily. Ser/Thr protein kinase family.

The protein localises to the cell membrane. It carries out the reaction L-seryl-[protein] + ATP = O-phospho-L-seryl-[protein] + ADP + H(+). The catalysed reaction is L-threonyl-[protein] + ATP = O-phospho-L-threonyl-[protein] + ADP + H(+). The sequence is that of Probable receptor-like protein kinase At5g18500 from Arabidopsis thaliana (Mouse-ear cress).